The following is a 430-amino-acid chain: Resistance to inhibitors of cholinesterase protein 19 (430 aa).

The AH domain maps to 56–260 (ASDNELDTCL…TSRAFETLAE (205 aa)). The tract at residues 279–342 (GTKPERERKS…SPLIEDVDDE (64 aa)) is disordered. The span at 281 to 294 (KPERERKSEKEESA) shows a compositional bias: basic and acidic residues.

Interacts with the GTPase activator protein tbc-8; the interaction is direct and may be required for the activation of rab-2 and dense vesicle maturation in cholinergic motoneurons. Interacts with rund-1. Expressed in all neurons. Highly expressed in m2 pharyngeal neurons and some pharyngeal interneurons. Also expressed in the excretory canal and the gland cells located just below the nerve ring in the head.

It localises to the cytoplasm. The protein resides in the cytoplasmic vesicle membrane. In terms of biological role, may be involved in neurotransmitter secretion. In association with the GTPase activator protein tbc-8 activates rab-2 during dense core vesicle maturation in cholinergic motoneurons. The sequence is that of Resistance to inhibitors of cholinesterase protein 19 from Caenorhabditis elegans.